The sequence spans 484 residues: Aspartyl/glutamyl-tRNA(Asn/Gln) amidotransferase subunit B (484 aa).

It belongs to the GatB/GatE family. GatB subfamily. In terms of assembly, heterotrimer of A, B and C subunits.

The enzyme catalyses L-glutamyl-tRNA(Gln) + L-glutamine + ATP + H2O = L-glutaminyl-tRNA(Gln) + L-glutamate + ADP + phosphate + H(+). The catalysed reaction is L-aspartyl-tRNA(Asn) + L-glutamine + ATP + H2O = L-asparaginyl-tRNA(Asn) + L-glutamate + ADP + phosphate + 2 H(+). Functionally, allows the formation of correctly charged Asn-tRNA(Asn) or Gln-tRNA(Gln) through the transamidation of misacylated Asp-tRNA(Asn) or Glu-tRNA(Gln) in organisms which lack either or both of asparaginyl-tRNA or glutaminyl-tRNA synthetases. The reaction takes place in the presence of glutamine and ATP through an activated phospho-Asp-tRNA(Asn) or phospho-Glu-tRNA(Gln). The polypeptide is Aspartyl/glutamyl-tRNA(Asn/Gln) amidotransferase subunit B (Anaeromyxobacter sp. (strain K)).